The sequence spans 268 residues: Tryptophan synthase alpha chain (268 aa).

Catalysis depends on proton acceptor residues Glu-49 and Asp-60.

This sequence belongs to the TrpA family. In terms of assembly, tetramer of two alpha and two beta chains.

The enzyme catalyses (1S,2R)-1-C-(indol-3-yl)glycerol 3-phosphate + L-serine = D-glyceraldehyde 3-phosphate + L-tryptophan + H2O. It participates in amino-acid biosynthesis; L-tryptophan biosynthesis; L-tryptophan from chorismate: step 5/5. The alpha subunit is responsible for the aldol cleavage of indoleglycerol phosphate to indole and glyceraldehyde 3-phosphate. This chain is Tryptophan synthase alpha chain, found in Salmonella choleraesuis (strain SC-B67).